Here is a 414-residue protein sequence, read N- to C-terminus: Serine hydroxymethyltransferase (414 aa).

(6S)-5,6,7,8-tetrahydrofolate-binding positions include leucine 121 and 125–127 (GHL). At lysine 229 the chain carries N6-(pyridoxal phosphate)lysine.

It belongs to the SHMT family. As to quaternary structure, homodimer. It depends on pyridoxal 5'-phosphate as a cofactor.

It localises to the cytoplasm. It catalyses the reaction (6R)-5,10-methylene-5,6,7,8-tetrahydrofolate + glycine + H2O = (6S)-5,6,7,8-tetrahydrofolate + L-serine. It functions in the pathway one-carbon metabolism; tetrahydrofolate interconversion. The protein operates within amino-acid biosynthesis; glycine biosynthesis; glycine from L-serine: step 1/1. Catalyzes the reversible interconversion of serine and glycine with tetrahydrofolate (THF) serving as the one-carbon carrier. This reaction serves as the major source of one-carbon groups required for the biosynthesis of purines, thymidylate, methionine, and other important biomolecules. Also exhibits THF-independent aldolase activity toward beta-hydroxyamino acids, producing glycine and aldehydes, via a retro-aldol mechanism. The protein is Serine hydroxymethyltransferase of Thiobacillus denitrificans (strain ATCC 25259 / T1).